A 255-amino-acid polypeptide reads, in one-letter code: tRNA (guanine-N(7)-)-methyltransferase (255 aa).

The tract at residues 1 to 29 (MMHDDPNEAGLPPDDAALPDEAADGADEV) is disordered. A compositionally biased stretch (acidic residues) spans 17–27 (ALPDEAADGAD). Residues glutamate 86, glutamate 111, aspartate 138, and aspartate 161 each coordinate S-adenosyl-L-methionine. Aspartate 161 is an active-site residue. Residues lysine 165, aspartate 197, and 232 to 235 (TKFE) each bind substrate.

Belongs to the class I-like SAM-binding methyltransferase superfamily. TrmB family.

The catalysed reaction is guanosine(46) in tRNA + S-adenosyl-L-methionine = N(7)-methylguanosine(46) in tRNA + S-adenosyl-L-homocysteine. Its pathway is tRNA modification; N(7)-methylguanine-tRNA biosynthesis. Catalyzes the formation of N(7)-methylguanine at position 46 (m7G46) in tRNA. The protein is tRNA (guanine-N(7)-)-methyltransferase of Burkholderia ambifaria (strain ATCC BAA-244 / DSM 16087 / CCUG 44356 / LMG 19182 / AMMD) (Burkholderia cepacia (strain AMMD)).